Here is a 515-residue protein sequence, read N- to C-terminus: Bifunctional purine biosynthesis protein PurH (515 aa).

The MGS-like domain maps to 1–145 (MTKRALISVS…KNHASVTVVV (145 aa)).

Belongs to the PurH family.

The catalysed reaction is (6R)-10-formyltetrahydrofolate + 5-amino-1-(5-phospho-beta-D-ribosyl)imidazole-4-carboxamide = 5-formamido-1-(5-phospho-D-ribosyl)imidazole-4-carboxamide + (6S)-5,6,7,8-tetrahydrofolate. The enzyme catalyses IMP + H2O = 5-formamido-1-(5-phospho-D-ribosyl)imidazole-4-carboxamide. The protein operates within purine metabolism; IMP biosynthesis via de novo pathway; 5-formamido-1-(5-phospho-D-ribosyl)imidazole-4-carboxamide from 5-amino-1-(5-phospho-D-ribosyl)imidazole-4-carboxamide (10-formyl THF route): step 1/1. It participates in purine metabolism; IMP biosynthesis via de novo pathway; IMP from 5-formamido-1-(5-phospho-D-ribosyl)imidazole-4-carboxamide: step 1/1. In Streptococcus mutans serotype c (strain ATCC 700610 / UA159), this protein is Bifunctional purine biosynthesis protein PurH.